The following is a 376-amino-acid chain: Multiphosphoryl transfer protein (376 aa).

A PTS EIIA type-2 domain is found at 2–142 (FQLSVQDIHP…EELRALLMGE (141 aa)). The active-site Tele-phosphohistidine intermediate; for EIIA activity is the histidine 62. Position 62 is a phosphohistidine; by HPr (histidine 62). Residues 156–284 (TLDIVASDLL…LTSDDAPTDD (129 aa)) are m domain. In terms of domain architecture, HPr spans 285-375 (VLSAEFVVRN…DAIAAGLGEG (91 aa)). Histidine 299 serves as the catalytic Pros-phosphohistidine intermediate; for HPr activity. Histidine 299 carries the post-translational modification Phosphohistidine; by EI.

Its subcellular location is the cytoplasm. The phosphoenolpyruvate-dependent sugar phosphotransferase system (sugar PTS), a major carbohydrate active transport system, catalyzes the phosphorylation of incoming sugar substrates concomitantly with their translocation across the cell membrane. The enzyme II FruAB PTS system is involved in fructose transport. The protein is Multiphosphoryl transfer protein of Escherichia coli O157:H7.